Consider the following 290-residue polypeptide: Bifunctional protein FolD (290 aa).

NADP(+)-binding positions include 169 to 171, Ile194, and Ile235; that span reads GAS.

It belongs to the tetrahydrofolate dehydrogenase/cyclohydrolase family. Homodimer.

The enzyme catalyses (6R)-5,10-methylene-5,6,7,8-tetrahydrofolate + NADP(+) = (6R)-5,10-methenyltetrahydrofolate + NADPH. The catalysed reaction is (6R)-5,10-methenyltetrahydrofolate + H2O = (6R)-10-formyltetrahydrofolate + H(+). Its pathway is one-carbon metabolism; tetrahydrofolate interconversion. In terms of biological role, catalyzes the oxidation of 5,10-methylenetetrahydrofolate to 5,10-methenyltetrahydrofolate and then the hydrolysis of 5,10-methenyltetrahydrofolate to 10-formyltetrahydrofolate. The sequence is that of Bifunctional protein FolD from Helicobacter pylori (strain HPAG1).